The sequence spans 344 residues: Uroporphyrinogen decarboxylase (344 aa).

Substrate-binding positions include 29–33, Asp79, Tyr153, Ser208, and His324; that span reads RQAGR.

This sequence belongs to the uroporphyrinogen decarboxylase family. Homodimer.

The protein resides in the cytoplasm. It catalyses the reaction uroporphyrinogen III + 4 H(+) = coproporphyrinogen III + 4 CO2. The protein operates within porphyrin-containing compound metabolism; protoporphyrin-IX biosynthesis; coproporphyrinogen-III from 5-aminolevulinate: step 4/4. Functionally, catalyzes the decarboxylation of four acetate groups of uroporphyrinogen-III to yield coproporphyrinogen-III. The sequence is that of Uroporphyrinogen decarboxylase from Rhizorhabdus wittichii (strain DSM 6014 / CCUG 31198 / JCM 15750 / NBRC 105917 / EY 4224 / RW1) (Sphingomonas wittichii).